We begin with the raw amino-acid sequence, 87 residues long: MANIKSAKKRAVQSEKARKHNASRRSMMRTFIKKVYAAIEAGDKAAALKAFNEMQPIVDRQAAKGLIHKNKAARHKANLTAQINKLA.

The tract at residues 1-26 (MANIKSAKKRAVQSEKARKHNASRRS) is disordered.

It belongs to the bacterial ribosomal protein bS20 family.

Binds directly to 16S ribosomal RNA. The sequence is that of Small ribosomal subunit protein bS20 from Salmonella typhi.